The sequence spans 499 residues: Putative antiporter subunit mnhD2 (499 aa).

Transmembrane regions (helical) follow at residues Ser-3–Thr-23, Ile-32–Val-52, Leu-78–Phe-98, Tyr-108–Ser-128, Leu-130–Leu-150, Ile-161–Leu-181, Ile-206–Phe-226, Leu-240–Phe-260, Pro-273–Tyr-293, Ile-308–Phe-328, Leu-330–Met-350, Phe-368–Gly-388, Gly-403–Phe-423, and Thr-450–Met-470.

The protein belongs to the CPA3 antiporters (TC 2.A.63) subunit D family. May form a heterooligomeric complex that consists of seven subunits: mnhA2, mnhB2, mnhC2, mnhD2, mnhE2, mnhF2 and mnhG2.

The protein localises to the cell membrane. In Staphylococcus haemolyticus (strain JCSC1435), this protein is Putative antiporter subunit mnhD2 (mnhD2).